Consider the following 314-residue polypeptide: 4-hydroxy-3-methylbut-2-enyl diphosphate reductase (314 aa).

Cysteine 12 contacts [4Fe-4S] cluster. Histidine 41 and histidine 74 together coordinate (2E)-4-hydroxy-3-methylbut-2-enyl diphosphate. Dimethylallyl diphosphate-binding residues include histidine 41 and histidine 74. Isopentenyl diphosphate-binding residues include histidine 41 and histidine 74. [4Fe-4S] cluster is bound at residue cysteine 96. (2E)-4-hydroxy-3-methylbut-2-enyl diphosphate is bound at residue histidine 124. Residue histidine 124 coordinates dimethylallyl diphosphate. Histidine 124 serves as a coordination point for isopentenyl diphosphate. Glutamate 126 serves as the catalytic Proton donor. Position 167 (threonine 167) interacts with (2E)-4-hydroxy-3-methylbut-2-enyl diphosphate. Cysteine 197 lines the [4Fe-4S] cluster pocket. Residues serine 225, serine 226, asparagine 227, and serine 269 each contribute to the (2E)-4-hydroxy-3-methylbut-2-enyl diphosphate site. Residues serine 225, serine 226, asparagine 227, and serine 269 each coordinate dimethylallyl diphosphate. Residues serine 225, serine 226, asparagine 227, and serine 269 each contribute to the isopentenyl diphosphate site.

It belongs to the IspH family. [4Fe-4S] cluster serves as cofactor.

It catalyses the reaction isopentenyl diphosphate + 2 oxidized [2Fe-2S]-[ferredoxin] + H2O = (2E)-4-hydroxy-3-methylbut-2-enyl diphosphate + 2 reduced [2Fe-2S]-[ferredoxin] + 2 H(+). The catalysed reaction is dimethylallyl diphosphate + 2 oxidized [2Fe-2S]-[ferredoxin] + H2O = (2E)-4-hydroxy-3-methylbut-2-enyl diphosphate + 2 reduced [2Fe-2S]-[ferredoxin] + 2 H(+). The protein operates within isoprenoid biosynthesis; dimethylallyl diphosphate biosynthesis; dimethylallyl diphosphate from (2E)-4-hydroxy-3-methylbutenyl diphosphate: step 1/1. It functions in the pathway isoprenoid biosynthesis; isopentenyl diphosphate biosynthesis via DXP pathway; isopentenyl diphosphate from 1-deoxy-D-xylulose 5-phosphate: step 6/6. Functionally, catalyzes the conversion of 1-hydroxy-2-methyl-2-(E)-butenyl 4-diphosphate (HMBPP) into a mixture of isopentenyl diphosphate (IPP) and dimethylallyl diphosphate (DMAPP). Acts in the terminal step of the DOXP/MEP pathway for isoprenoid precursor biosynthesis. The polypeptide is 4-hydroxy-3-methylbut-2-enyl diphosphate reductase (Haemophilus influenzae (strain PittGG)).